The following is a 424-amino-acid chain: Adenosylmethionine-8-amino-7-oxononanoate aminotransferase (424 aa).

Position 46 (tryptophan 46) interacts with substrate. Residue 106–107 (GS) coordinates pyridoxal 5'-phosphate. Substrate is bound at residue tyrosine 138. Residue aspartate 240 participates in pyridoxal 5'-phosphate binding. The substrate site is built by lysine 269 and glycine 303. Lysine 269 carries the post-translational modification N6-(pyridoxal phosphate)lysine. 304–305 (HS) serves as a coordination point for pyridoxal 5'-phosphate. Substrate is bound at residue arginine 391.

It belongs to the class-III pyridoxal-phosphate-dependent aminotransferase family. BioA subfamily. In terms of assembly, homodimer. It depends on pyridoxal 5'-phosphate as a cofactor.

It is found in the cytoplasm. It catalyses the reaction (8S)-8-amino-7-oxononanoate + S-adenosyl-L-methionine = S-adenosyl-4-methylsulfanyl-2-oxobutanoate + (7R,8S)-7,8-diammoniononanoate. It participates in cofactor biosynthesis; biotin biosynthesis; 7,8-diaminononanoate from 8-amino-7-oxononanoate (SAM route): step 1/1. Catalyzes the transfer of the alpha-amino group from S-adenosyl-L-methionine (SAM) to 7-keto-8-aminopelargonic acid (KAPA) to form 7,8-diaminopelargonic acid (DAPA). It is the only aminotransferase known to utilize SAM as an amino donor. Complements a bioU deletion in Synechocystis PCC 6803. The chain is Adenosylmethionine-8-amino-7-oxononanoate aminotransferase from Synechococcus elongatus (strain ATCC 33912 / PCC 7942 / FACHB-805) (Anacystis nidulans R2).